Here is an 848-residue protein sequence, read N- to C-terminus: Leucine--tRNA ligase (848 aa).

The segment at 1–21 (MTENTPGTSAPERFDPATADT) is disordered. The short motif at 51 to 61 (PYPSGRIHIGH) is the 'HIGH' region element. A 'KMSKS' region motif is present at residues 625 to 629 (KMSKS). K628 provides a ligand contact to ATP.

This sequence belongs to the class-I aminoacyl-tRNA synthetase family.

The protein resides in the cytoplasm. The enzyme catalyses tRNA(Leu) + L-leucine + ATP = L-leucyl-tRNA(Leu) + AMP + diphosphate. This is Leucine--tRNA ligase from Novosphingobium aromaticivorans (strain ATCC 700278 / DSM 12444 / CCUG 56034 / CIP 105152 / NBRC 16084 / F199).